We begin with the raw amino-acid sequence, 389 residues long: Chalcone synthase E (389 aa).

Cys-164 is an active-site residue.

Belongs to the thiolase-like superfamily. Chalcone/stilbene synthases family.

It catalyses the reaction (E)-4-coumaroyl-CoA + 3 malonyl-CoA + 3 H(+) = 2',4,4',6'-tetrahydroxychalcone + 3 CO2 + 4 CoA. The protein operates within secondary metabolite biosynthesis; flavonoid biosynthesis. Its function is as follows. The primary product of this enzyme is 4,2',4',6'-tetrahydroxychalcone (also termed naringenin-chalcone or chalcone) which can under specific conditions spontaneously isomerize into naringenin. In Ipomoea purpurea (Common morning glory), this protein is Chalcone synthase E (CHSE).